The following is a 185-amino-acid chain: MRRKVRRLTLAVSALVALFPAVAGCSDSGDNKPGATIPSTPANAEGRHGPFFPQCGGVSDQTVTELTRVTGLVNTAKNSVGCQWLAGGGILGPHFSFSWYRGSPIGRERKTEELSRASVEDINIDGHSGFIAIGNEPSLGDSLCEVGIQFSDDFIEWSVSFSQKPFPPPCDIAKELTRQSIANSK.

The N-terminal stretch at 1 to 24 (MRRKVRRLTLAVSALVALFPAVAG) is a signal peptide. A lipid anchor (N-palmitoyl cysteine) is attached at cysteine 25. The S-diacylglycerol cysteine moiety is linked to residue cysteine 25. The interval 26-50 (SDSGDNKPGATIPSTPANAEGRHGP) is disordered.

It is found in the cell membrane. The protein is Putative lipoprotein LprB (lprB) of Mycobacterium bovis (strain ATCC BAA-935 / AF2122/97).